A 217-amino-acid polypeptide reads, in one-letter code: UPF0193 protein EVG1 (217 aa).

The protein belongs to the UPF0193 (EVG1) family.

The protein is UPF0193 protein EVG1 (C22orf23) of Homo sapiens (Human).